Here is a 593-residue protein sequence, read N- to C-terminus: Capsid protein 1 (593 aa).

Belongs to the NCLDV major capsid protein family.

Its subcellular location is the virion. The protein is Capsid protein 1 of Acanthamoeba polyphaga mimivirus (APMV).